The chain runs to 712 residues: Polyribonucleotide nucleotidyltransferase (712 aa).

The Mg(2+) site is built by D487 and D493. A KH domain is found at 554–613 (PKIITMTINPDKIRDVIGPSGKQINKIIEETGVKIDIEQDGTVFISSINQEMNDKAKKII). An S1 motif domain is found at 623 to 691 (GEIYEGKVKR…KQGRVNLSRK (69 aa)).

Belongs to the polyribonucleotide nucleotidyltransferase family. Mg(2+) serves as cofactor.

The protein resides in the cytoplasm. It catalyses the reaction RNA(n+1) + phosphate = RNA(n) + a ribonucleoside 5'-diphosphate. In terms of biological role, involved in mRNA degradation. Catalyzes the phosphorolysis of single-stranded polyribonucleotides processively in the 3'- to 5'-direction. The sequence is that of Polyribonucleotide nucleotidyltransferase from Bacillus cereus (strain ATCC 10987 / NRS 248).